Here is a 392-residue protein sequence, read N- to C-terminus: Monooxygenase AgnR1 (392 aa).

Residues 1–20 form the signal peptide; the sequence is MSAPQKCAAVVVGAGPAGLA. N-linked (GlcNAc...) asparagine glycosylation occurs at Asn-134.

Monooxygenase; part of the gene cluster that mediates the biosynthesis of agnestins, dihydroxy-xanthone metabolites. The pathway begins with the assembly and cyclization of atrochrysone thioester by the non-reducing polyketide synthase Agnpks1. The atrochrysone carboxyl ACP thioesterase AgnL7 then breaks the thioester bond and releases the atrochrysone carboxylic acid as the first enzyme-free intermediate. The decarboxylase AgnL1 then catalyzes the concerted decarboxylation-elimination required to convert atochrysone carboxylic acid into emodin anthrone, which is further oxidized to emodin by the anthrone oxygenase AgnL2. Emodin then undergoes reduction catalyzed by the oxidoreductase AgnL4 to yield the dihydroquinone tautomer which is the substrate for reduction by the short chain dehydrogenase AgnL6 reduction to produce hydroxyketone, followed by AgnL8 dehydration and likely spontaneous autoxidation to chrysophanol. Baeyer-Villiger oxidation by the oxidase AgnL3 leads to monodictyphenone via cleavage of the C-10/C-10a bond of chrysophanol. Alternative cleavage at the C-4a/C-10 bond of chrysophanol also leads to the formation some cephalone F. Further conversion to agnestins A and B, requires reduction to dihydro-monodictyphenone, oxidation to agnestin C probably via an epoxide, and rearrangement to either agnestin A or agnestin B directly, although agnestin A or agnestin B can also interconvert. Within the cluster, AgnR1 is the only unassigned oxidoreductase present which could be involved in this conversion. However, AgnR1 seems not to be involved in this step, and thus genes involved in the proposed oxidation/reduction may be located elsewhere on the genome. Further agnestin A derivatives are probably formed by spontaneous decarboxylations, dehydrations and methanolysis reactions. This chain is Monooxygenase AgnR1, found in Paecilomyces divaricatus (Penicillium divaricatum).